Here is a 291-residue protein sequence, read N- to C-terminus: tRNA (guanine-N(1)-)-methyltransferase (291 aa).

S-adenosyl-L-methionine is bound by residues G160 and I184–L189.

Belongs to the RNA methyltransferase TrmD family. In terms of assembly, homodimer.

Its subcellular location is the cytoplasm. It catalyses the reaction guanosine(37) in tRNA + S-adenosyl-L-methionine = N(1)-methylguanosine(37) in tRNA + S-adenosyl-L-homocysteine + H(+). Specifically methylates guanosine-37 in various tRNAs. The chain is tRNA (guanine-N(1)-)-methyltransferase from Corynebacterium efficiens (strain DSM 44549 / YS-314 / AJ 12310 / JCM 11189 / NBRC 100395).